The primary structure comprises 135 residues: AVCVSLLGAANIPPQPLNLLQFKNMIQCAGSRLWVAYVKYGCYCGPGGTGTPLDQLDRCCQTHDHCYDNAKKFGNCIPYFKSYEYTCNKPDLTCTDAKGSCARNVCDCDRAAAICFAAAPYNLANFGINKETHCQ.

7 disulfides stabilise this stretch: cysteine 28–cysteine 87, cysteine 42–cysteine 134, cysteine 44–cysteine 60, cysteine 59–cysteine 115, cysteine 66–cysteine 108, cysteine 76–cysteine 101, and cysteine 94–cysteine 106. Ca(2+) contacts are provided by tyrosine 43, glycine 45, and glycine 47. The active site involves histidine 63. Aspartate 64 contributes to the Ca(2+) binding site. Residue aspartate 109 is part of the active site.

Belongs to the phospholipase A2 family. Group I subfamily. D49 sub-subfamily. It depends on Ca(2+) as a cofactor. In terms of tissue distribution, expressed by the venom gland.

The protein localises to the secreted. It catalyses the reaction a 1,2-diacyl-sn-glycero-3-phosphocholine + H2O = a 1-acyl-sn-glycero-3-phosphocholine + a fatty acid + H(+). In terms of biological role, snake venom phospholipase A2 (PLA2) that inhibits neuromuscular transmission by blocking acetylcholine release from the nerve termini. PLA2 catalyzes the calcium-dependent hydrolysis of the 2-acyl groups in 3-sn-phosphoglycerides. The chain is Basic phospholipase A2 KBf-VA from Bungarus fasciatus (Banded krait).